The sequence spans 270 residues: Karrikin insensitive 2 receptor CA (270 aa).

The active-site Nucleophile is Ser95. Residues Asp217 and His246 contribute to the active site.

This sequence belongs to the AB hydrolase superfamily. In terms of tissue distribution, expressed in stigma.

The protein resides in the nucleus. Its subcellular location is the cytoplasm. In terms of biological role, hydrolase which may be involved in plant olfaction during volatile communication. In Petunia hybrida (Petunia), this protein is Karrikin insensitive 2 receptor CA.